The following is a 321-amino-acid chain: uncharacterized protein (321 aa).

It belongs to the NAD(P)-dependent epimerase/dehydratase family.

This is an uncharacterized protein from Staphylococcus aureus (strain MRSA252).